Consider the following 927-residue polypeptide: Dual serine/threonine and tyrosine protein kinase (927 aa).

A disordered region spans residues 1-21 (MEADGQSWAGESVSGPGPGGG). The stretch at 393–429 (RKKENELYESLMNIANRKQEEMKDMIVETLNTMKEEL) forms a coiled coil. Residues 650–904 (PKLGQELGRG…PLLGIVQPML (255 aa)) form the Protein kinase domain. Residues 656-664 (LGRGQYGVV) and Lys679 each bind ATP. The active-site Proton acceptor is Asp775.

This sequence belongs to the protein kinase superfamily. Ser/Thr protein kinase family. As to expression, expressed in brain, heart, skeletal muscle, kidney and lung. Expressed in maturing tubular epithelia, with the most prominent expression in the medulla and the papilla. Expressed in thin ascending limb of the loop of Henle and the distal convoluted tubule. Expressed in all layers of transitional ureteric epithelium and in the ureteric smooth-muscle cells (at protein level). Widely expressed. Highly expressed in many brain regions, including in cerebellum, olfactory, hippocampus and cerebral cortex.

The protein localises to the cytoplasm. It localises to the cell membrane. It is found in the apical cell membrane. The protein resides in the basolateral cell membrane. Its subcellular location is the cell junction. It carries out the reaction L-seryl-[protein] + ATP = O-phospho-L-seryl-[protein] + ADP + H(+). The enzyme catalyses L-threonyl-[protein] + ATP = O-phospho-L-threonyl-[protein] + ADP + H(+). It catalyses the reaction L-tyrosyl-[protein] + ATP = O-phospho-L-tyrosyl-[protein] + ADP + H(+). Acts as a positive regulator of ERK phosphorylation downstream of fibroblast growth factor-receptor activation. Involved in the regulation of both caspase-dependent apoptosis and caspase-independent cell death. In the skin, it plays a predominant role in suppressing caspase-dependent apoptosis in response to UV stress in a range of dermal cell types. The polypeptide is Dual serine/threonine and tyrosine protein kinase (Dstyk) (Mus musculus (Mouse)).